A 212-amino-acid polypeptide reads, in one-letter code: uncharacterized protein (212 aa).

Residues Met-1–Ser-88 form a disordered region. Ser-13 carries the post-translational modification Phosphoserine. A compositionally biased stretch (pro residues) spans Ala-23–Thr-41. The segment covering Val-45 to Ile-54 has biased composition (basic and acidic residues).

Belongs to the remorin family.

It localises to the cell membrane. This is an uncharacterized protein from Arabidopsis thaliana (Mouse-ear cress).